A 316-amino-acid chain; its full sequence is Protoheme IX farnesyltransferase (316 aa).

9 helical membrane-spanning segments follow: residues 32–52 (VMSL…GHIH), 53–73 (PVLG…SGAL), 93–113 (IPAG…LSGF), 116–136 (VILG…TIFF), 152–172 (NIVI…ACVT), 180–200 (TVLF…LALF), 221–241 (VTKH…ILPS), 252–271 (LVAA…VWRM), and 289–309 (IFYL…SIFV).

Belongs to the UbiA prenyltransferase family. Protoheme IX farnesyltransferase subfamily.

The protein localises to the cell inner membrane. The catalysed reaction is heme b + (2E,6E)-farnesyl diphosphate + H2O = Fe(II)-heme o + diphosphate. Its pathway is porphyrin-containing compound metabolism; heme O biosynthesis; heme O from protoheme: step 1/1. In terms of biological role, converts heme B (protoheme IX) to heme O by substitution of the vinyl group on carbon 2 of heme B porphyrin ring with a hydroxyethyl farnesyl side group. This chain is Protoheme IX farnesyltransferase, found in Rhizobium leguminosarum bv. trifolii (strain WSM2304).